The sequence spans 361 residues: Peroxidase A (361 aa).

It belongs to the peroxidase family. Partially N-glycosylated.

The protein resides in the secreted. The catalysed reaction is 2 a phenolic donor + H2O2 = 2 a phenolic radical donor + 2 H2O. The sequence is that of Peroxidase A from Aloe vera (Aloe).